A 346-amino-acid polypeptide reads, in one-letter code: Ribulose-5-phosphate reductase (346 aa).

The Zn(2+) site is built by C45, H71, E72, and E151.

It belongs to the zinc-containing alcohol dehydrogenase family. Zn(2+) is required as a cofactor.

The enzyme catalyses D-ribitol 5-phosphate + NADP(+) = D-ribulose 5-phosphate + NADPH + H(+). It functions in the pathway cell wall biogenesis; poly(ribitol phosphate) teichoic acid biosynthesis. Functionally, catalyzes the NADPH dependent reduction of D-ribulose 5-phosphate to D-ribitol 5-phosphate. The chain is Ribulose-5-phosphate reductase from Streptococcus pneumoniae (strain ATCC BAA-255 / R6).